The primary structure comprises 93 residues: Large ribosomal subunit protein uL23 (93 aa).

The protein belongs to the universal ribosomal protein uL23 family. In terms of assembly, part of the 50S ribosomal subunit. Contacts protein L29, and trigger factor when it is bound to the ribosome.

Its function is as follows. One of the early assembly proteins it binds 23S rRNA. One of the proteins that surrounds the polypeptide exit tunnel on the outside of the ribosome. Forms the main docking site for trigger factor binding to the ribosome. The polypeptide is Large ribosomal subunit protein uL23 (Opitutus terrae (strain DSM 11246 / JCM 15787 / PB90-1)).